Consider the following 439-residue polypeptide: Protein translocase subunit SecY (439 aa).

10 consecutive transmembrane segments (helical) span residues Ile19–Gly39, Tyr68–Leu88, Tyr116–Met136, Leu151–Ile171, Phe176–Ile196, Trp216–Val236, Val269–Leu289, Trp312–Val332, Val373–Gly393, and Lys396–Val416.

Belongs to the SecY/SEC61-alpha family. As to quaternary structure, component of the Sec protein translocase complex. Heterotrimer consisting of SecY, SecE and SecG subunits. The heterotrimers can form oligomers, although 1 heterotrimer is thought to be able to translocate proteins. Interacts with the ribosome. Interacts with SecDF, and other proteins may be involved. Interacts with SecA.

It is found in the cell membrane. The central subunit of the protein translocation channel SecYEG. Consists of two halves formed by TMs 1-5 and 6-10. These two domains form a lateral gate at the front which open onto the bilayer between TMs 2 and 7, and are clamped together by SecE at the back. The channel is closed by both a pore ring composed of hydrophobic SecY resides and a short helix (helix 2A) on the extracellular side of the membrane which forms a plug. The plug probably moves laterally to allow the channel to open. The ring and the pore may move independently. This chain is Protein translocase subunit SecY, found in Lactococcus lactis subsp. cremoris (Streptococcus cremoris).